A 388-amino-acid polypeptide reads, in one-letter code: Succinate--CoA ligase [ADP-forming] subunit beta (388 aa).

The region spanning 9–244 (KQLFARYGLP…QSQEDPREAQ (236 aa)) is the ATP-grasp domain. Residues K46, 53–55 (GRG), E99, T102, and E107 contribute to the ATP site. Residues N199 and D213 each coordinate Mg(2+). Substrate contacts are provided by residues N264 and 321–323 (GIV).

The protein belongs to the succinate/malate CoA ligase beta subunit family. Heterotetramer of two alpha and two beta subunits. Mg(2+) is required as a cofactor.

The catalysed reaction is succinate + ATP + CoA = succinyl-CoA + ADP + phosphate. It carries out the reaction GTP + succinate + CoA = succinyl-CoA + GDP + phosphate. The protein operates within carbohydrate metabolism; tricarboxylic acid cycle; succinate from succinyl-CoA (ligase route): step 1/1. Succinyl-CoA synthetase functions in the citric acid cycle (TCA), coupling the hydrolysis of succinyl-CoA to the synthesis of either ATP or GTP and thus represents the only step of substrate-level phosphorylation in the TCA. The beta subunit provides nucleotide specificity of the enzyme and binds the substrate succinate, while the binding sites for coenzyme A and phosphate are found in the alpha subunit. The sequence is that of Succinate--CoA ligase [ADP-forming] subunit beta from Escherichia coli O8 (strain IAI1).